Reading from the N-terminus, the 624-residue chain is uncharacterized protein (624 aa).

Residues 108-138 (PTAWSGMESDSTASERSLPQRTDTTSVSSQY) are disordered. The residue at position 112 (Ser-112) is a Phosphoserine. Residues 115-138 (ESDSTASERSLPQRTDTTSVSSQY) are compositionally biased toward polar residues. The residue at position 205 (Ser-205) is a Phosphoserine. Disordered stretches follow at residues 217–236 (LMES…PGTR) and 305–329 (KREC…PVSE).

This is an uncharacterized protein from Rattus norvegicus (Rat).